We begin with the raw amino-acid sequence, 359 residues long: Peptide chain release factor 1 (359 aa).

At Gln-236 the chain carries N5-methylglutamine.

The protein belongs to the prokaryotic/mitochondrial release factor family. In terms of processing, methylated by PrmC. Methylation increases the termination efficiency of RF1.

It localises to the cytoplasm. Functionally, peptide chain release factor 1 directs the termination of translation in response to the peptide chain termination codons UAG and UAA. This chain is Peptide chain release factor 1 (prfA), found in Mycoplasma genitalium (strain ATCC 33530 / DSM 19775 / NCTC 10195 / G37) (Mycoplasmoides genitalium).